The chain runs to 443 residues: Palmitoyltransferase pfa5 (443 aa).

The next 2 helical transmembrane spans lie at 17–37 (IIPP…TKPL) and 57–77 (AGAA…ATYL). The interval 96–137 (CTQNQTGSDGSKHRHRRHRRRKSGHHLSKTTEKTDRSDGGDV) is disordered. A compositionally biased stretch (basic residues) spans 107–123 (KHRHRRHRRRKSGHHLS). Positions 124–137 (KTTEKTDRSDGGDV) are enriched in basic and acidic residues. The DHHC domain maps to 175–225 (VYCSTCCQFKTDRAHHCREVDRCVRKMDHFCPWVGGVVSETSFKFFIQFIV). Transmembrane regions (helical) follow at residues 220-240 (FIQF…VFAI) and 256-276 (WIVC…VAIS). The segment at 410 to 443 (AGLEVSTESESADPVGAAETPQHEQRRGKHRRRN) is disordered.

The protein belongs to the DHHC palmitoyltransferase family. PFA5 subfamily. Post-translationally, autopalmitoylated.

The protein resides in the membrane. It carries out the reaction L-cysteinyl-[protein] + hexadecanoyl-CoA = S-hexadecanoyl-L-cysteinyl-[protein] + CoA. This Aspergillus fumigatus (strain ATCC MYA-4609 / CBS 101355 / FGSC A1100 / Af293) (Neosartorya fumigata) protein is Palmitoyltransferase pfa5 (pfa5).